The primary structure comprises 404 residues: MKLPIYMDYSATTPADPRVAEKMMQYLTLDGTFGNPASRSHRFGWQAEEAVDVARNNIAELVGSDPREIVFTSGATEADNLAIKGAANFYQKKGKHIITCKTEHKAVLDTCRQLEREGFEVTYMTPQPNGLIDLNALEAVMRDDTILVSIMHVNNEIGIIQDIETIGEMCHARGIIFHVDATQSVGKLPIDLSKLKVDLMSFSGHKIYGPKGIGALYVRRKPRVRIEAQMHGGGHERGMRSGTLPVHQIVGMGEAYRIAKEEMSTEVLRLRVLRDRLWNGLKDIEEVYLNGALEQGAPNILNVSFNFVEGESLIMALKDLAVSSGSACTSASLEPSYVLRALGLNDELAHSSIRFSLGRFTTEEEVDYAIDLVRKSIGRLRELSPLWEMHKQGVDISTIEWSAH.

Residues 75–76, Asn155, Gln183, and 203–205 contribute to the pyridoxal 5'-phosphate site; these read AT and SGH. The residue at position 206 (Lys206) is an N6-(pyridoxal phosphate)lysine. Thr243 contacts pyridoxal 5'-phosphate. Cys328 acts as the Cysteine persulfide intermediate in catalysis. [2Fe-2S] cluster is bound at residue Cys328.

The protein belongs to the class-V pyridoxal-phosphate-dependent aminotransferase family. NifS/IscS subfamily. As to quaternary structure, homodimer. Forms a heterotetramer with IscU, interacts with other sulfur acceptors. Pyridoxal 5'-phosphate serves as cofactor.

The protein localises to the cytoplasm. It catalyses the reaction (sulfur carrier)-H + L-cysteine = (sulfur carrier)-SH + L-alanine. The protein operates within cofactor biosynthesis; iron-sulfur cluster biosynthesis. Functionally, master enzyme that delivers sulfur to a number of partners involved in Fe-S cluster assembly, tRNA modification or cofactor biosynthesis. Catalyzes the removal of elemental sulfur atoms from cysteine to produce alanine. Functions as a sulfur delivery protein for Fe-S cluster synthesis onto IscU, an Fe-S scaffold assembly protein, as well as other S acceptor proteins. The chain is Cysteine desulfurase IscS from Edwardsiella ictaluri (strain 93-146).